We begin with the raw amino-acid sequence, 162 residues long: Phosphopantetheine adenylyltransferase (162 aa).

Serine 9 provides a ligand contact to substrate. ATP is bound by residues 9-10 (SF) and histidine 17. The substrate site is built by lysine 41, isoleucine 77, and lysine 91. Residues 92 to 94 (GLR), glutamate 102, and 126 to 132 (YAFLSSS) each bind ATP.

The protein belongs to the bacterial CoaD family. Homohexamer. Mg(2+) is required as a cofactor.

The protein resides in the cytoplasm. It carries out the reaction (R)-4'-phosphopantetheine + ATP + H(+) = 3'-dephospho-CoA + diphosphate. Its pathway is cofactor biosynthesis; coenzyme A biosynthesis; CoA from (R)-pantothenate: step 4/5. In terms of biological role, reversibly transfers an adenylyl group from ATP to 4'-phosphopantetheine, yielding dephospho-CoA (dPCoA) and pyrophosphate. The chain is Phosphopantetheine adenylyltransferase from Frankia casuarinae (strain DSM 45818 / CECT 9043 / HFP020203 / CcI3).